The following is a 346-amino-acid chain: MKFSPAHYLLPLLPALVLSTRQDYEELEKQLKEVFKERSTILRQLTKTSRELDGIKVNLQSLKNDEQSAKTDVQKLLELGQKQREEMKSLQEALQNQLKETSEKAEKHQATINFLKTEVERKSKMIRDLQNENKSLKNKLLSGNKLCGIHAEESKKIQAQLKELRYGKKDLLFKAQQLTDLEQKLAVAKNELEKAALDRESQMKAMKETVQLCLTSVFRDQPPPPLSLITSNPTRMLLPPRNIASKLPDAAAKSKPQQSASGNNESSQVESTKEGNPSTTACDSQDEGRPCSMKHKESPPSNATAETEPIPQKLQMPPCSECEVKKAPEKPLTSFEGMAAREEKIL.

The signal sequence occupies residues 1 to 19 (MKFSPAHYLLPLLPALVLS). Positions 16–211 (LVLSTRQDYE…QMKAMKETVQ (196 aa)) form a coiled coil. N-linked (GlcNAc...) asparagine glycosylation occurs at Asn-133. Positions 164-192 (LRYGKKDLLFKAQQLTDLEQKLAVAKNEL) are leucine-zipper. Disordered stretches follow at residues 221–240 (QPPPPLSLITSNPTRMLLPP) and 248–346 (PDAA…EKIL). A compositionally biased stretch (low complexity) spans 250 to 261 (AAAKSKPQQSAS). The span at 262–283 (GNNESSQVESTKEGNPSTTACD) shows a compositional bias: polar residues. An N-linked (GlcNAc...) asparagine glycan is attached at Asn-264. The segment covering 286 to 298 (DEGRPCSMKHKES) has biased composition (basic and acidic residues). Asn-302 carries N-linked (GlcNAc...) asparagine glycosylation.

Its subcellular location is the secreted. The sequence is that of Leucine zipper protein 2 (LUZP2) from Homo sapiens (Human).